The chain runs to 328 residues: D-cysteine desulfhydrase (328 aa).

Residue Lys-51 is modified to N6-(pyridoxal phosphate)lysine.

It belongs to the ACC deaminase/D-cysteine desulfhydrase family. As to quaternary structure, homodimer. Pyridoxal 5'-phosphate is required as a cofactor.

The catalysed reaction is D-cysteine + H2O = hydrogen sulfide + pyruvate + NH4(+) + H(+). Functionally, catalyzes the alpha,beta-elimination reaction of D-cysteine and of several D-cysteine derivatives. It could be a defense mechanism against D-cysteine. This chain is D-cysteine desulfhydrase, found in Escherichia coli O6:H1 (strain CFT073 / ATCC 700928 / UPEC).